Here is a 555-residue protein sequence, read N- to C-terminus: MRLIGMPKEKYDPPDPRRIYTIMSAEEVANGKKSHWAELEISGRVRSLSTSLWSLTHLTALHLNDNNLARIPPDIAKLHNLVYLDLSSNKLRSLPAELGNMVSLRELLLNDNYLRVLPYELGRLFQLQTLGLTGNPLSQDIMSLYQDPDGTRKLLNFMLDNLAVHPEQLPPRPWITLKERDQILPSASFTVMCYNVLCDKYATRQLYGYCPSWALNWEYRKKGIMEEIVNWDADIISLQEVETEQYFTLFLPALKDRGYDGFFSPKSRAKIMSEQERKHVDGCAIFFKTEKFTLVQKHTVEFNQVAMANSDGSEAMLNRVMTKDNIGVAVVLEVHKELFGTGMKPIHAADKQLLIVANAHMHWDPEYSDVKLIQTMMFVSEVKNILEKASSRPGSPTADPNSIPLVLCADLNSLPDSGVVEYLSNGGVADNHKDFKELRYNECLMNFSCSGKNGSSEGRITHGFQLKSAYENNLMPYTNYTFDFKGVIDYIFYSKTHMNVLGVLGPLDPQWLVENNITGCPHPHIPSDHFSLLTQLELHPPLLPLVNGVHLPNRR.

Positions 1 to 152 are required for interaction with CNOT1, CNOT3 and CNOT7; sequence MRLIGMPKEK…SLYQDPDGTR (152 aa). LRR repeat units lie at residues 57-78, 80-101, 103-125, and 126-148; these read HLTA…IAKL, NLVY…LGNM, SLRE…GRLF, and QLQT…YQDP. The tract at residues 158-555 is nuclease domain; that stretch reads MLDNLAVHPE…VNGVHLPNRR (398 aa). E240 contributes to the Mg(2+) binding site. The substrate site is built by E240, E276, H360, and P365. D410 contributes to the Mg(2+) binding site. Catalysis depends on D410, which acts as the Proton donor/acceptor. The substrate site is built by N412, N479, and F484.

This sequence belongs to the CCR4/nocturin family. In terms of assembly, component of the CCR4-NOT complex; distinct complexes seem to exist that differ in the participation of probably mutually exclusive catalytic subunits; the complex contains two deadenylase subunits, CNOT6 or CNOT6L, and CNOT7 or CNOT8. Interacts with CNOT1, CNOT3, CNOT7, CNOT8 and CNOT9. Interacts with TOB1. Interacts with NANOS2. Interacts with ZFP36. Interacts with ZFP36L2. Interacts with RBM46. Requires Mg(2+) as cofactor.

It localises to the cytoplasm. Its subcellular location is the nucleus. The catalysed reaction is Exonucleolytic cleavage of poly(A) to 5'-AMP.. Poly(A) nuclease with 3'-5' RNase activity. Catalytic component of the CCR4-NOT complex which is one of the major cellular mRNA deadenylases and is linked to various cellular processes including bulk mRNA degradation, miRNA-mediated repression, translational repression during translational initiation and general transcription regulation. Additional complex functions may be a consequence of its influence on mRNA expression. Involved in mRNA decay mediated by the major-protein-coding determinant of instability (mCRD) of the FOS gene in the cytoplasm. Involved in deadenylation-dependent degradation of CDKN1B mRNA. Its mRNA deadenylase activity can be inhibited by TOB1. Mediates cell proliferation and cell survival and prevents cellular senescence. The protein is CCR4-NOT transcription complex subunit 6-like (Cnot6l) of Mus musculus (Mouse).